The primary structure comprises 89 residues: MANTASARKRIRQNERRRERNVARMSRMRTFIKKVELAIQAGDKSAAAEAFKVAQPEMQRAAGKGVIAKNTISRKLSRLSARVKALATA.

Residues 1–22 are disordered; it reads MANTASARKRIRQNERRRERNV. Positions 12–22 are enriched in basic and acidic residues; that stretch reads RQNERRRERNV.

Belongs to the bacterial ribosomal protein bS20 family.

In terms of biological role, binds directly to 16S ribosomal RNA. This Gluconobacter oxydans (strain 621H) (Gluconobacter suboxydans) protein is Small ribosomal subunit protein bS20.